A 483-amino-acid chain; its full sequence is Glutamyl-tRNA(Gln) amidotransferase subunit A (483 aa).

Catalysis depends on charge relay system residues Lys-77 and Ser-152. The Acyl-ester intermediate role is filled by Ser-176.

The protein belongs to the amidase family. GatA subfamily. As to quaternary structure, heterotrimer of A, B and C subunits.

The enzyme catalyses L-glutamyl-tRNA(Gln) + L-glutamine + ATP + H2O = L-glutaminyl-tRNA(Gln) + L-glutamate + ADP + phosphate + H(+). Functionally, allows the formation of correctly charged Gln-tRNA(Gln) through the transamidation of misacylated Glu-tRNA(Gln) in organisms which lack glutaminyl-tRNA synthetase. The reaction takes place in the presence of glutamine and ATP through an activated gamma-phospho-Glu-tRNA(Gln). This chain is Glutamyl-tRNA(Gln) amidotransferase subunit A, found in Listeria innocua serovar 6a (strain ATCC BAA-680 / CLIP 11262).